Consider the following 506-residue polypeptide: PHD finger protein 10 (506 aa).

Disordered regions lie at residues 1-66 (MAAV…QDFG) and 293-377 (DPEL…SVSG). A compositionally biased stretch (basic and acidic residues) spans 23–35 (VKEDNSNDTKDPE). Residues 52–66 (GDSTPSCENSNQDFG) are compositionally biased toward polar residues. Residues 90–299 (MLQEQVSEYL…DPLDPELLAL (210 aa)) form an SAY region. A compositionally biased stretch (low complexity) spans 326–338 (SIDSSSMNMSESD). Residues 353-367 (KVKEKSSTPRKEGSK) show a composition bias toward basic and acidic residues. The segment at 387-444 (ICGICLKGKDANKKGRSERLIHCSQCDNSGHPSCLDMSAELVAVIKKYPWQCMECKTC) adopts a PHD-type 1; degenerate zinc-finger fold. The PHD-type 2; degenerate zinc finger occupies 446–489 (ICGQPHHEEEMMFCDTCDRGYHTFCVGLGALPSGRWICDCCQKV).

Belongs to the SAYP family. In terms of assembly, component of neural progenitors-specific chromatin remodeling complex (npBAF complex), a subfamily of ATP-dependent SWI/SNF chromatin remodeling complexes.

It is found in the nucleus. In terms of biological role, involved in transcription activity regulation by chromatin remodeling in the context of the neural progenitors-specific chromatin remodeling complex (npBAF complex). May play a role in the proliferation of neural progenitors. This chain is PHD finger protein 10 (phf10), found in Xenopus laevis (African clawed frog).